The primary structure comprises 272 residues: Phosphoribosylformylglycinamidine synthase subunit PurQ (272 aa).

Residues 8-243 enclose the Glutamine amidotransferase type-1 domain; that stretch reads VLVMSGYGIN…SEPEYQLKKE (236 aa). Cysteine 98 acts as the Nucleophile in catalysis. Active-site residues include histidine 225, glutamate 227, and glutamate 235.

In terms of assembly, part of the FGAM synthase complex composed of 1 PurL, 1 PurQ and 2 PurS subunits.

The protein resides in the cytoplasm. It catalyses the reaction N(2)-formyl-N(1)-(5-phospho-beta-D-ribosyl)glycinamide + L-glutamine + ATP + H2O = 2-formamido-N(1)-(5-O-phospho-beta-D-ribosyl)acetamidine + L-glutamate + ADP + phosphate + H(+). The catalysed reaction is L-glutamine + H2O = L-glutamate + NH4(+). It participates in purine metabolism; IMP biosynthesis via de novo pathway; 5-amino-1-(5-phospho-D-ribosyl)imidazole from N(2)-formyl-N(1)-(5-phospho-D-ribosyl)glycinamide: step 1/2. Part of the phosphoribosylformylglycinamidine synthase complex involved in the purines biosynthetic pathway. Catalyzes the ATP-dependent conversion of formylglycinamide ribonucleotide (FGAR) and glutamine to yield formylglycinamidine ribonucleotide (FGAM) and glutamate. The FGAM synthase complex is composed of three subunits. PurQ produces an ammonia molecule by converting glutamine to glutamate. PurL transfers the ammonia molecule to FGAR to form FGAM in an ATP-dependent manner. PurS interacts with PurQ and PurL and is thought to assist in the transfer of the ammonia molecule from PurQ to PurL. In Methanococcus maripaludis (strain C7 / ATCC BAA-1331), this protein is Phosphoribosylformylglycinamidine synthase subunit PurQ.